A 447-amino-acid chain; its full sequence is Argininosuccinate synthase (447 aa).

ATP is bound by residues 17–25 and A43; that span reads AFSGGLDTS. Position 99 (Y99) interacts with L-citrulline. ATP contacts are provided by G129 and T131. T131, N135, and D136 together coordinate L-aspartate. L-citrulline is bound at residue N135. Position 136 (D136) interacts with ATP. Residues R139 and S192 each coordinate L-citrulline. D194 lines the ATP pocket. Residues T201, E203, and E280 each contribute to the L-citrulline site.

It belongs to the argininosuccinate synthase family. Type 2 subfamily. In terms of assembly, homotetramer.

Its subcellular location is the cytoplasm. The enzyme catalyses L-citrulline + L-aspartate + ATP = 2-(N(omega)-L-arginino)succinate + AMP + diphosphate + H(+). It participates in amino-acid biosynthesis; L-arginine biosynthesis; L-arginine from L-ornithine and carbamoyl phosphate: step 2/3. This Salmonella paratyphi B (strain ATCC BAA-1250 / SPB7) protein is Argininosuccinate synthase.